Consider the following 374-residue polypeptide: Queuine tRNA-ribosyltransferase (374 aa).

Asp89 acts as the Proton acceptor in catalysis. Residues 89–93, Asp143, Gln187, and Gly214 each bind substrate; that span reads DSGGF. The interval 245-251 is RNA binding; sequence GVGKPED. Asp264 acts as the Nucleophile in catalysis. The RNA binding; important for wobble base 34 recognition stretch occupies residues 269-273; it reads TRNAR. Positions 302, 304, 307, and 333 each coordinate Zn(2+).

Belongs to the queuine tRNA-ribosyltransferase family. In terms of assembly, homodimer. Within each dimer, one monomer is responsible for RNA recognition and catalysis, while the other monomer binds to the replacement base PreQ1. Requires Zn(2+) as cofactor.

The catalysed reaction is 7-aminomethyl-7-carbaguanine + guanosine(34) in tRNA = 7-aminomethyl-7-carbaguanosine(34) in tRNA + guanine. Its pathway is tRNA modification; tRNA-queuosine biosynthesis. Functionally, catalyzes the base-exchange of a guanine (G) residue with the queuine precursor 7-aminomethyl-7-deazaguanine (PreQ1) at position 34 (anticodon wobble position) in tRNAs with GU(N) anticodons (tRNA-Asp, -Asn, -His and -Tyr). Catalysis occurs through a double-displacement mechanism. The nucleophile active site attacks the C1' of nucleotide 34 to detach the guanine base from the RNA, forming a covalent enzyme-RNA intermediate. The proton acceptor active site deprotonates the incoming PreQ1, allowing a nucleophilic attack on the C1' of the ribose to form the product. After dissociation, two additional enzymatic reactions on the tRNA convert PreQ1 to queuine (Q), resulting in the hypermodified nucleoside queuosine (7-(((4,5-cis-dihydroxy-2-cyclopenten-1-yl)amino)methyl)-7-deazaguanosine). The polypeptide is Queuine tRNA-ribosyltransferase (Shewanella sp. (strain MR-4)).